The primary structure comprises 700 residues: ATP-dependent zinc metalloprotease FtsH (700 aa).

The Cytoplasmic portion of the chain corresponds to 1-20; sequence MSSDNGSGRQGGDRGGSTGY. A helical transmembrane segment spans residues 21–41; that stretch reads NLLMYLGFGAIIATLVALYVL. Over 42–171 the chain is Periplasmic; that stretch reads QMFQTSLDYT…FRHADPPGPW (130 aa). The chain crosses the membrane as a helical span at residues 172-192; sequence EQHSQLIIGMLLAAMLIYIVV. Over 193 to 700 the chain is Cytoplasmic; that stretch reads RRLSAAGSPM…ITAPATERSG (508 aa). An ATP-binding site is contributed by 262–269; sequence GPPGTGKT. His-484 contributes to the Zn(2+) binding site. Glu-485 is a catalytic residue. The Zn(2+) site is built by His-488 and Asp-561.

This sequence in the central section; belongs to the AAA ATPase family. It in the C-terminal section; belongs to the peptidase M41 family. As to quaternary structure, homohexamer. The cofactor is Zn(2+).

It localises to the cell inner membrane. In terms of biological role, acts as a processive, ATP-dependent zinc metallopeptidase for both cytoplasmic and membrane proteins. Plays a role in the quality control of integral membrane proteins. This Pirellula staleyi (strain ATCC 27377 / DSM 6068 / ICPB 4128) (Pirella staleyi) protein is ATP-dependent zinc metalloprotease FtsH.